A 136-amino-acid chain; its full sequence is Large ribosomal subunit protein uL16c (136 aa).

This sequence belongs to the universal ribosomal protein uL16 family. Part of the 50S ribosomal subunit.

It localises to the plastid. The protein resides in the chloroplast. This chain is Large ribosomal subunit protein uL16c, found in Guizotia abyssinica (Niger).